A 733-amino-acid polypeptide reads, in one-letter code: Centrosomal protein of 68 kDa (733 aa).

Residues 71–80 (SKEPVADRSK) show a composition bias toward basic and acidic residues. Disordered regions lie at residues 71-92 (SKEP…SASV), 150-207 (GLSQ…SFAN), and 222-244 (VVGA…DATG). Positions 178–190 (SSRSISASSVGSS) are enriched in low complexity. Residues 231 to 241 (GSAQPLTSGSD) are compositionally biased toward polar residues. A Phosphoserine modification is found at Ser-315. Residues 420 to 442 (PQLKTKEKEPPFPRQKRGRQHVS) form a disordered region. Residues Ser-453 and Ser-459 each carry the phosphoserine modification. Residues 497 to 571 (HSSLQVSDSD…KPLKTQPASK (75 aa)) are disordered. Over residues 540–569 (IQPQDSRGKSSLMSNQTLGVSSKPLKTQPA) the composition is skewed to polar residues.

As to quaternary structure, interacts with CNTLN; the interaction recruits CEP68 to the centrosome. Interacts with the SCF(FBXW11) complex which contains SKP1, CUL1 and FBXW11; the interaction is probably mediated by FBXW11 and the complex also contains CDK5RAP2 and PCNT. Also interacts with F-box protein BTRC. Interacts with serine/threonine-protein kinase PLK1; the interaction leads to phosphorylation of CEP68 and its subsequent degradation. Interacts with NEK2; the interaction leads to phosphorylation of CEP68. In terms of processing, phosphorylation by PLK1 is required for binding to BTRC in prometaphase. Phosphorylated directly or indirectly by NEK2. NEK2-mediated phosphorylation promotes CEP68 dissociation from the centrosome and its degradation at the onset of mitosis. Post-translationally, ubiquitinated and targeted for proteasomal degradation in early mitosis by the SCF(BTRC) and/or SCF(FBXW11) E3 ubiquitin-protein ligase complexes. Degradation is complete by prometaphase and is required for removal of CDK5RAP2 from the peripheral pericentriolar material and subsequent centriole separation.

It is found in the cytoplasm. It localises to the cytoskeleton. Its subcellular location is the microtubule organizing center. The protein localises to the centrosome. Involved in maintenance of centrosome cohesion, probably as part of a linker structure which prevents centrosome splitting. Required for localization of CDK5RAP2 to the centrosome during interphase. Contributes to CROCC/rootletin filament formation. This chain is Centrosomal protein of 68 kDa (Cep68), found in Mus musculus (Mouse).